Here is a 349-residue protein sequence, read N- to C-terminus: Phosphoribosylformylglycinamidine cyclo-ligase (349 aa).

The protein belongs to the AIR synthase family.

Its subcellular location is the cytoplasm. The enzyme catalyses 2-formamido-N(1)-(5-O-phospho-beta-D-ribosyl)acetamidine + ATP = 5-amino-1-(5-phospho-beta-D-ribosyl)imidazole + ADP + phosphate + H(+). It participates in purine metabolism; IMP biosynthesis via de novo pathway; 5-amino-1-(5-phospho-D-ribosyl)imidazole from N(2)-formyl-N(1)-(5-phospho-D-ribosyl)glycinamide: step 2/2. In Methanococcus maripaludis (strain C6 / ATCC BAA-1332), this protein is Phosphoribosylformylglycinamidine cyclo-ligase.